The chain runs to 86 residues: Putative membrane protein insertion efficiency factor (86 aa).

Belongs to the UPF0161 family.

It localises to the cell inner membrane. Its function is as follows. Could be involved in insertion of integral membrane proteins into the membrane. This chain is Putative membrane protein insertion efficiency factor, found in Pseudomonas aeruginosa (strain UCBPP-PA14).